The chain runs to 206 residues: Fibroblast growth factor 4 (206 aa).

An N-terminal signal peptide occupies residues 1–30 (MSGPGTAAVALLPAVLLALLAPWAGRGGAA).

This sequence belongs to the heparin-binding growth factors family. As to quaternary structure, interacts with FGFR1, FGFR2, FGFR3 and FGFR4. Affinity between fibroblast growth factors (FGFs) and their receptors is increased by heparan sulfate glycosaminoglycans that function as coreceptors.

The protein resides in the secreted. Functionally, plays an important role in the regulation of embryonic development, cell proliferation, and cell differentiation. Required for normal limb and cardiac valve development during embryogenesis. May play a role in embryonic molar tooth bud development via inducing the expression of MSX1, MSX2 and MSX1-mediated expression of SDC1 in dental mesenchyme cells. In Homo sapiens (Human), this protein is Fibroblast growth factor 4.